The primary structure comprises 207 residues: MSAKNAELKKTNLKKNYKAVCMEPKLTQIYDFKGFKQEGLLIRKGMTRELKNELREVREQLTEKMEEIKQIKDIMDKDFDKLYEFVEIMKEMQQDMDEKMDVLINNQKNNKLPFQNQAKEQQKFWQLGKMDKSSQAMITEEPDGVPLACDKNVVPPKPTRNPLESLHPCQSCCEKCLLCALKTNRNQGRPSHHAWVPFSPLSSGAAF.

Residues 43–79 (RKGMTRELKNELREVREQLTEKMEEIKQIKDIMDKDF) are a coiled coil.

In terms of tissue distribution, testis-specific. Expressed during spermatogenesis.

Its subcellular location is the nucleus. In Mus musculus (Mouse), this protein is Testis-expressed protein 35 (Tex35).